The following is a 185-amino-acid chain: Ribosome-recycling factor (185 aa).

The segment at Ala-138–Gly-185 is disordered.

Belongs to the RRF family.

It localises to the cytoplasm. Its function is as follows. Responsible for the release of ribosomes from messenger RNA at the termination of protein biosynthesis. May increase the efficiency of translation by recycling ribosomes from one round of translation to another. This Lactobacillus delbrueckii subsp. bulgaricus (strain ATCC 11842 / DSM 20081 / BCRC 10696 / JCM 1002 / NBRC 13953 / NCIMB 11778 / NCTC 12712 / WDCM 00102 / Lb 14) protein is Ribosome-recycling factor.